Reading from the N-terminus, the 274-residue chain is 2,3,4,5-tetrahydropyridine-2,6-dicarboxylate N-succinyltransferase (274 aa).

The substrate site is built by Arg107 and Asp144.

The protein belongs to the transferase hexapeptide repeat family. Homotrimer.

It is found in the cytoplasm. The enzyme catalyses (S)-2,3,4,5-tetrahydrodipicolinate + succinyl-CoA + H2O = (S)-2-succinylamino-6-oxoheptanedioate + CoA. The protein operates within amino-acid biosynthesis; L-lysine biosynthesis via DAP pathway; LL-2,6-diaminopimelate from (S)-tetrahydrodipicolinate (succinylase route): step 1/3. In Cereibacter sphaeroides (strain ATCC 17025 / ATH 2.4.3) (Rhodobacter sphaeroides), this protein is 2,3,4,5-tetrahydropyridine-2,6-dicarboxylate N-succinyltransferase.